A 370-amino-acid chain; its full sequence is 3-isopropylmalate dehydrogenase (370 aa).

Substrate contacts are provided by Arg-99, Arg-109, Arg-137, and Asp-227. Residues Asp-227, Asp-251, and Asp-255 each coordinate Mg(2+). 290–302 is an NAD(+) binding site; it reads GSAPDIAGQDKAN.

The protein belongs to the isocitrate and isopropylmalate dehydrogenases family. LeuB type 1 subfamily. As to quaternary structure, homodimer. It depends on Mg(2+) as a cofactor. Requires Mn(2+) as cofactor.

The protein localises to the cytoplasm. The enzyme catalyses (2R,3S)-3-isopropylmalate + NAD(+) = 4-methyl-2-oxopentanoate + CO2 + NADH. It participates in amino-acid biosynthesis; L-leucine biosynthesis; L-leucine from 3-methyl-2-oxobutanoate: step 3/4. In terms of biological role, catalyzes the oxidation of 3-carboxy-2-hydroxy-4-methylpentanoate (3-isopropylmalate) to 3-carboxy-4-methyl-2-oxopentanoate. The product decarboxylates to 4-methyl-2 oxopentanoate. The protein is 3-isopropylmalate dehydrogenase of Rhodospirillum rubrum (strain ATCC 11170 / ATH 1.1.1 / DSM 467 / LMG 4362 / NCIMB 8255 / S1).